We begin with the raw amino-acid sequence, 166 residues long: MALVEDNNAVAVSFSEEQEALVLKSWAILKKDSANIALRFFLKIFEVAPSASQMFSFLRNSDVPLEKNPKLKTHAMSVFVMTCEAAAQLRKAGKVTVRDTTLKRLGATHLKYGVGDAHFEVVKFALLDTIKEEVPADMWSPAMKSAWSEAYDHLVAAIKQEMKPAE.

Residues 13–163 (SFSEEQEALV…LVAAIKQEMK (151 aa)) form the Globin domain. Residues 46 to 50 (EVAPS) carry the Homodimerization motif. Residues Ser-56, Lys-70, His-74, Arg-104, Thr-108, and His-109 each contribute to the heme b site. The Homodimerization motif lies at 116–128 (DAHFEVVKFALLD).

It belongs to the plant globin family. As to quaternary structure, homodimer. It depends on heme b as a cofactor. As to expression, expressed in coleoptiles, embryos, leaves, seminal roots and roots.

It is found in the cytoplasm. Its subcellular location is the nucleus. It carries out the reaction Fe(III)-heme b-[protein] + nitric oxide + H2O = Fe(II)-heme b-[protein] + nitrite + 2 H(+). Its activity is regulated as follows. Slowly reduced by ascorbic acid (AA); this reaction may become a source of nitric oxide (NO) during hypoxia. Phytoglobin that reduces nitrite to nitric oxide under anoxic conditions (e.g. during flooding or in waterlogged soil). May not function as an oxygen storage or transport protein. Has an unusually high affinity for O(2) through a hexacoordinate heme iron because of a very low dissociation constant. This chain is Anaerobic nitrite reductase NSHB1, found in Oryza sativa subsp. japonica (Rice).